Consider the following 810-residue polypeptide: DNA replication licensing factor mcm-6 (810 aa).

The 208-residue stretch at 346–553 (IEKNIVDSLF…VTDYAIARRI (208 aa)) folds into the MCM domain. 6 residues coordinate ATP: S400, T401, A402, K403, S404, and N505. Positions 529-532 (SRFD) match the Arginine finger motif. The ADP site is built by R622 and E625. Residues 685–705 (KENQGGDDDMEHDGEKDETAK) form a disordered region.

The protein belongs to the MCM family. In terms of assembly, component of the mcm2-7 complex. The complex forms a toroidal hexameric ring with the proposed subunit order mcm2-mcm6-mcm4-mcm7-mcm3-mcm5 (By simililarity).

Its subcellular location is the nucleus. It catalyses the reaction ATP + H2O = ADP + phosphate + H(+). Functionally, acts as a component of the MCM2-7 complex (MCM complex) which is the replicative helicase essential for 'once per cell cycle' DNA replication initiation and elongation in eukaryotic cells. Core component of CDC45-MCM-GINS (CMG) helicase, the molecular machine that unwinds template DNA during replication, and around which the replisome is built. The active ATPase sites in the MCM2-7 ring are formed through the interaction surfaces of two neighboring subunits such that a critical structure of a conserved arginine finger motif is provided in trans relative to the ATP-binding site of the Walker A box of the adjacent subunit. The six ATPase active sites, however, are likely to contribute differentially to the complex helicase activity. This is DNA replication licensing factor mcm-6 from Caenorhabditis briggsae.